The sequence spans 303 residues: Probable endonuclease 4 (303 aa).

The Zn(2+) site is built by His78, His118, Glu154, Asp188, His191, His222, Asp235, His237, and Glu267.

This sequence belongs to the AP endonuclease 2 family. Zn(2+) is required as a cofactor.

It catalyses the reaction Endonucleolytic cleavage to 5'-phosphooligonucleotide end-products.. In terms of biological role, endonuclease IV plays a role in DNA repair. It cleaves phosphodiester bonds at apurinic or apyrimidinic (AP) sites, generating a 3'-hydroxyl group and a 5'-terminal sugar phosphate. The protein is Probable endonuclease 4 of Mycoplasmoides gallisepticum (strain R(low / passage 15 / clone 2)) (Mycoplasma gallisepticum).